We begin with the raw amino-acid sequence, 235 residues long: Sugar fermentation stimulation protein homolog (235 aa).

This sequence belongs to the SfsA family.

This is Sugar fermentation stimulation protein homolog from Ectopseudomonas mendocina (strain ymp) (Pseudomonas mendocina).